Here is a 186-residue protein sequence, read N- to C-terminus: TATA-box-binding protein (186 aa).

Tandem repeats lie at residues 10 to 86 and 101 to 179.

Belongs to the TBP family.

Its function is as follows. General factor that plays a role in the activation of archaeal genes transcribed by RNA polymerase. Binds specifically to the TATA box promoter element which lies close to the position of transcription initiation. This is TATA-box-binding protein from Haloarcula marismortui (strain ATCC 43049 / DSM 3752 / JCM 8966 / VKM B-1809) (Halobacterium marismortui).